Consider the following 232-residue polypeptide: 2,3,4,5-tetrahydropyridine-2,6-dicarboxylate N-acetyltransferase (232 aa).

The protein belongs to the transferase hexapeptide repeat family. DapH subfamily.

It catalyses the reaction (S)-2,3,4,5-tetrahydrodipicolinate + acetyl-CoA + H2O = L-2-acetamido-6-oxoheptanedioate + CoA. It functions in the pathway amino-acid biosynthesis; L-lysine biosynthesis via DAP pathway; LL-2,6-diaminopimelate from (S)-tetrahydrodipicolinate (acetylase route): step 1/3. Functionally, catalyzes the transfer of an acetyl group from acetyl-CoA to tetrahydrodipicolinate. In Kosmotoga olearia (strain ATCC BAA-1733 / DSM 21960 / TBF 19.5.1), this protein is 2,3,4,5-tetrahydropyridine-2,6-dicarboxylate N-acetyltransferase.